A 191-amino-acid polypeptide reads, in one-letter code: Retinin (191 aa).

The N-terminal stretch at 1 to 21 is a signal peptide; that stretch reads MSRLFLPVLAIVLVSIGASHT. The interval 52–88 is disordered; that stretch reads LADGSSGSVSSSAAQPEDQSQEEAEEQQVSSASSGSA. Low complexity-rich tracts occupy residues 55–69 and 78–88; these read GSSG…QPED and QQVSSASSGSA.

Phosphorylated. Specifically expressed in cornea (at protein level). Detected in retina and cortex.

The protein localises to the secreted. This is Retinin from Drosophila melanogaster (Fruit fly).